The following is a 250-amino-acid chain: Probable aquaporin TIP-type RB7-5A (250 aa).

2 consecutive transmembrane segments (helical) span residues 20 to 42 and 55 to 77; these read AYVAEFIATLLFVFAGVGSAIAY and GLVAVAVAHAFALFVGVSIAANI. An NPA 1 motif is present at residues 83-85; sequence NPA. 3 consecutive transmembrane segments (helical) span residues 97-119, 140-162, and 172-194; these read TILTGFFYWIAQLLGSTVACLLL, LQGVVMEIIITFALVYTVYATAA, and IAPIAIGFIVGANILAAGPFSGG. The NPA 2 signature appears at 197–199; sequence NPA. A helical transmembrane segment spans residues 215–237; the sequence is WIYWAGPLIGGGLAGFIYGDVFI.

Belongs to the MIP/aquaporin (TC 1.A.8) family. TIP (TC 1.A.8.10) subfamily. Roots.

Its subcellular location is the vacuole membrane. In terms of biological role, channel protein in tonoplast. These proteins may allow the diffusion of amino acids and/or peptides from the vacuolar compartment to the cytoplasm. The chain is Probable aquaporin TIP-type RB7-5A from Nicotiana tabacum (Common tobacco).